The primary structure comprises 194 residues: uncharacterized protein (194 aa).

A helical membrane pass occupies residues 17–37; sequence DVWLYLLVFGCLSVLVLVLVH.

It belongs to the IIV-6 307L family.

It localises to the membrane. This is an uncharacterized protein from Invertebrate iridescent virus 3 (IIV-3).